Reading from the N-terminus, the 345-residue chain is Phosphoribosylformylglycinamidine cyclo-ligase (345 aa).

This sequence belongs to the AIR synthase family.

It is found in the cytoplasm. The catalysed reaction is 2-formamido-N(1)-(5-O-phospho-beta-D-ribosyl)acetamidine + ATP = 5-amino-1-(5-phospho-beta-D-ribosyl)imidazole + ADP + phosphate + H(+). It participates in purine metabolism; IMP biosynthesis via de novo pathway; 5-amino-1-(5-phospho-D-ribosyl)imidazole from N(2)-formyl-N(1)-(5-phospho-D-ribosyl)glycinamide: step 2/2. The chain is Phosphoribosylformylglycinamidine cyclo-ligase from Limosilactobacillus fermentum (strain NBRC 3956 / LMG 18251) (Lactobacillus fermentum).